A 407-amino-acid chain; its full sequence is Phenazine 1,6-dicarboxylic acid hydroxylase PhzS (407 aa).

3 residues coordinate FAD: Gly-17, Val-134, and Asp-313.

FAD serves as cofactor.

The catalysed reaction is phenazine-1,6-dicarboxylate + NADH + O2 + 2 H(+) = 6-hydroxyphenazine-1-carboxylate + CO2 + NAD(+) + H2O. The enzyme catalyses 6-hydroxyphenazine-1-carboxylate + NADH + O2 + 2 H(+) = 1,6-dihydroxyphenazine + CO2 + NAD(+) + H2O. It catalyses the reaction phenazine-1-carboxylate + NADH + O2 + 2 H(+) = 1-hydroxyphenazine + CO2 + NAD(+) + H2O. In terms of biological role, involved in the biosynthesis of phenazine natural products including myxin, an N(5),N(10)-dioxide phenazine antiobiotic, which has antimicrobial activity. Catalyzes the decarboxylative hydroxylations of phenazine 1,6-dicarboxylic acid (PDC) to produce 1,6-dihydroxyphenazine (DHP). Low activity with phenazine 1-carboxylic acid (PCA) to produce 1-hydroxyphenazine. In Lysobacter antibioticus, this protein is Phenazine 1,6-dicarboxylic acid hydroxylase PhzS.